The sequence spans 751 residues: uncharacterized protein (751 aa).

Positions 73 to 169 (FGVVHSHTPK…PVLIDDDTGE (97 aa)) are disordered. Low complexity predominate over residues 96 to 109 (ATSTRRSATAQRAA). A compositionally biased stretch (polar residues) spans 111–120 (LKSSPVDQWS).

This is an uncharacterized protein from Invertebrate iridescent virus 3 (IIV-3).